Here is a 988-residue protein sequence, read N- to C-terminus: Kinesin-like protein CIN8 (988 aa).

The region spanning 33-470 is the Kinesin motor domain; that stretch reads NILVAVRCRG…LEYASKAKNI (438 aa). 125 to 132 serves as a coordination point for ATP; sequence GMTSTGKT. The segment at 206 to 301 is disordered; it reads FDSNVNGTSA…NSNNTNQQQS (96 aa). Residues 208 to 237 show a composition bias toward low complexity; sequence SNVNGTSASGSSSRSSSRNNSPRSAPDNSR. Over residues 248-280 the composition is skewed to polar residues; the sequence is HNTTGNSKISNNNHNKFSRFKQTSQESTRAHAS. A compositionally biased stretch (low complexity) spans 281 to 301; it reads NNHQNVHIPNNNSNNTNQQQS. 2 coiled-coil regions span residues 514–619 and 707–769; these read EHYK…ELQQ and KLAE…MQNF. A compositionally biased stretch (basic and acidic residues) spans 965-974; it reads ALQEKRKPED. Positions 965-988 are disordered; sequence ALQEKRKPEDEVLLQAKLQRRNPD.

The protein belongs to the TRAFAC class myosin-kinesin ATPase superfamily. Kinesin family. BimC subfamily.

It localises to the cytoplasm. The protein resides in the cytoskeleton. Its subcellular location is the spindle. Elongates the mitotic spindle by interacting with spindle microtubules to generate an outward force pushing spindle poles apart. Following spindle assembly, CIN8 and KIP1 apparently act to oppose a force, possibly generated by KAR3, that draws separated poles back together. This chain is Kinesin-like protein CIN8 (CIN8), found in Candida glabrata (strain ATCC 2001 / BCRC 20586 / JCM 3761 / NBRC 0622 / NRRL Y-65 / CBS 138) (Yeast).